The sequence spans 288 residues: uncharacterized protein (288 aa).

4 helical membrane-spanning segments follow: residues 43-63 (LFTL…NYII), 190-210 (LFIF…FLLE), 243-263 (GIPI…SILI), and 265-285 (LLQM…NKSL).

Its subcellular location is the cell membrane. This is an uncharacterized protein from Rickettsia prowazekii (strain Madrid E).